The sequence spans 256 residues: Fructose-1,6-bisphosphatase/inositol-1-monophosphatase (256 aa).

The Mg(2+) site is built by Glu-65, Asp-79, Ile-81, and Asp-82. Substrate-binding positions include 82 to 84, Arg-172, Ala-177, and Arg-196; that span reads DGT. Asp-201 serves as a coordination point for Mg(2+).

The protein belongs to the inositol monophosphatase superfamily. FBPase class 4 family. In terms of assembly, homotetramer. Mg(2+) is required as a cofactor.

It carries out the reaction beta-D-fructose 1,6-bisphosphate + H2O = beta-D-fructose 6-phosphate + phosphate. The catalysed reaction is a myo-inositol phosphate + H2O = myo-inositol + phosphate. Its activity is regulated as follows. In contrast to mammalian I-1-P phosphatases, is only weakly inhibited by Li(+), since 50% inhibitory concentration for Li(+) is about 100 mM, and the Li(+) concentration required to totally abolish I-1-Pase activity is 1 M. Its function is as follows. Phosphatase with broad specificity; it can dephosphorylate fructose 1,6-bisphosphate, both D and L isomers of inositol-1-phosphate (I-1-P) but displaying a 20-fold higher rate of hydrolysis of D-I-1-P than of the L isomer, 2'-AMP, pNPP, inositol-2-phosphate, beta-glycerol phosphate, and alpha-D-glucose-1-phosphate. Cannot hydrolyze glucose-6-phosphate, fructose-6-phosphate, 5'-AMP and NAD(+). May be involved in the biosynthesis of a unique osmolyte, di-myo-inositol 1,1-phosphate. This Thermotoga maritima (strain ATCC 43589 / DSM 3109 / JCM 10099 / NBRC 100826 / MSB8) protein is Fructose-1,6-bisphosphatase/inositol-1-monophosphatase (suhB).